The following is a 288-amino-acid chain: T-cell-interacting, activating receptor on myeloid cells protein 1 (288 aa).

Positions 1–16 are cleaved as a signal peptide; it reads MISRLLSLLCLRLCVG. Topologically, residues 17-258 are extracellular; sequence QTDIPENGSP…EGYTVDNLIR (242 aa). Ig-like C2-type domains lie at 27 to 113 and 124 to 217; these read PKPS…HPSN and PQPS…LEIS. Cystine bridges form between Cys-49/Cys-97 and Cys-146/Cys-196. 2 N-linked (GlcNAc...) asparagine glycosylation sites follow: Asn-74 and Asn-185. Residues 259 to 279 form a helical membrane-spanning segment; that stretch reads VGVAAAILLIVGGFLVEAWHS. Topologically, residues 280–288 are cytoplasmic; sequence ERLSPNKPW.

Interacts with Fc receptor gamma chain FCER1G. Post-translationally, N-glycosylated. Expressed in lung, uterus, lymph nodes, spleen, thymus and bone marrow. Expressed in bone marrow CD11b(+)Gr-1(+) granulocyte precursors and mature neutrophils.

It is found in the cell membrane. Its function is as follows. May act as receptor. Negatively regulates TCR-mediated CD4(+) T cell proliferation and activation, possibly by binding an unknown ligand on the T cell surface. Enhances Toll-like receptor-mediated production of pro-inflammatory cytokines by macrophages and neutrophils. In Mus musculus (Mouse), this protein is T-cell-interacting, activating receptor on myeloid cells protein 1 (Tarm1).